Reading from the N-terminus, the 207-residue chain is NADH-quinone oxidoreductase subunit C (207 aa).

Belongs to the complex I 30 kDa subunit family. In terms of assembly, NDH-1 is composed of 14 different subunits. Subunits NuoB, C, D, E, F, and G constitute the peripheral sector of the complex.

Its subcellular location is the cell inner membrane. It catalyses the reaction a quinone + NADH + 5 H(+)(in) = a quinol + NAD(+) + 4 H(+)(out). Functionally, NDH-1 shuttles electrons from NADH, via FMN and iron-sulfur (Fe-S) centers, to quinones in the respiratory chain. The immediate electron acceptor for the enzyme in this species is believed to be ubiquinone. Couples the redox reaction to proton translocation (for every two electrons transferred, four hydrogen ions are translocated across the cytoplasmic membrane), and thus conserves the redox energy in a proton gradient. This chain is NADH-quinone oxidoreductase subunit C, found in Rickettsia felis (strain ATCC VR-1525 / URRWXCal2) (Rickettsia azadi).